Reading from the N-terminus, the 471-residue chain is 3-isopropylmalate dehydratase large subunit (471 aa).

[4Fe-4S] cluster is bound by residues Cys351, Cys414, and Cys417.

This sequence belongs to the aconitase/IPM isomerase family. LeuC type 1 subfamily. Heterodimer of LeuC and LeuD. [4Fe-4S] cluster serves as cofactor.

The enzyme catalyses (2R,3S)-3-isopropylmalate = (2S)-2-isopropylmalate. The protein operates within amino-acid biosynthesis; L-leucine biosynthesis; L-leucine from 3-methyl-2-oxobutanoate: step 2/4. In terms of biological role, catalyzes the isomerization between 2-isopropylmalate and 3-isopropylmalate, via the formation of 2-isopropylmaleate. The protein is 3-isopropylmalate dehydratase large subunit of Colwellia psychrerythraea (strain 34H / ATCC BAA-681) (Vibrio psychroerythus).